The primary structure comprises 212 residues: Interleukin-6 (212 aa).

The first 29 residues, 1-29 (MTSFSTSAFRPVAFSLGLLLVMPAAFPAP), serve as a signal peptide directing secretion. Cys-72 and Cys-78 form a disulfide bridge. N-linked (GlcNAc...) asparagine glycosylation is present at Asn-73. The residue at position 81 (Ser-81) is a Phosphoserine. Cys-101 and Cys-111 form a disulfide bridge. N-linked (GlcNAc...) asparagine glycans are attached at residues Asn-160 and Asn-172.

Belongs to the IL-6 superfamily. As to quaternary structure, component of a hexamer of two molecules each of IL6, IL6R and IL6ST; first binds to IL6R to associate with the signaling subunit IL6ST. Interacts with IL6R (via the N-terminal ectodomain); this interaction may be affected by IL6R-binding with SORL1, hence decreasing IL6 cis signaling. Interacts with SORL1 (via the N-terminal ectodomain); this interaction leads to IL6 internalization and lysosomal degradation. May form a trimeric complex with the soluble SORL1 ectodomain and soluble IL6R receptor; this interaction might stabilize circulating IL6, hence promoting IL6 trans signaling.

It is found in the secreted. Functionally, cytokine with a wide variety of biological functions in immunity, tissue regeneration, and metabolism. Binds to IL6R, then the complex associates to the signaling subunit IL6ST/gp130 to trigger the intracellular IL6-signaling pathway. The interaction with the membrane-bound IL6R and IL6ST stimulates 'classic signaling', whereas the binding of IL6 and soluble IL6R to IL6ST stimulates 'trans-signaling'. Alternatively, 'cluster signaling' occurs when membrane-bound IL6:IL6R complexes on transmitter cells activate IL6ST receptors on neighboring receiver cells. In terms of biological role, IL6 is a potent inducer of the acute phase response. Rapid production of IL6 contributes to host defense during infection and tissue injury, but excessive IL6 synthesis is involved in disease pathology. In the innate immune response, is synthesized by myeloid cells, such as macrophages and dendritic cells, upon recognition of pathogens through toll-like receptors (TLRs) at the site of infection or tissue injury. In the adaptive immune response, is required for the differentiation of B cells into immunoglobulin-secreting cells. Plays a major role in the differentiation of CD4(+) T cell subsets. Essential factor for the development of T follicular helper (Tfh) cells that are required for the induction of germinal-center formation. Required to drive naive CD4(+) T cells to the Th17 lineage. Also required for proliferation of myeloma cells and the survival of plasmablast cells. Acts as an essential factor in bone homeostasis and on vessels directly or indirectly by induction of VEGF, resulting in increased angiogenesis activity and vascular permeability. Induces, through 'trans-signaling' and synergistically with IL1B and TNF, the production of VEGF. Involved in metabolic controls, is discharged into the bloodstream after muscle contraction increasing lipolysis and improving insulin resistance. 'Trans-signaling' in central nervous system also regulates energy and glucose homeostasis. Mediates, through GLP-1, crosstalk between insulin-sensitive tissues, intestinal L cells and pancreatic islets to adapt to changes in insulin demand. Also acts as a myokine. Plays a protective role during liver injury, being required for maintenance of tissue regeneration. Also has a pivotal role in iron metabolism by regulating HAMP/hepcidin expression upon inflammation or bacterial infection. Through activation of IL6ST-YAP-NOTCH pathway, induces inflammation-induced epithelial regeneration. The sequence is that of Interleukin-6 (IL6) from Saimiri sciureus (Common squirrel monkey).